Here is a 312-residue protein sequence, read N- to C-terminus: Olfactory receptor 2L8 (312 aa).

The Extracellular segment spans residues 1 to 24 (MENYNQTSTDFILLGLFPPSRIDL). N5 carries an N-linked (GlcNAc...) asparagine glycan. The helical transmembrane segment at 25–48 (FFFILIVFIFLMALIGNLSMILLI) threads the bilayer. Topologically, residues 49 to 56 (FLDTHLHT) are cytoplasmic. Residues 57 to 78 (PMYFLLSQLSLIDLNYISTIVP) traverse the membrane as a helical segment. The Extracellular portion of the chain corresponds to 79-99 (KMASDFLHGNKSISFTGCGIQ). N88 carries N-linked (GlcNAc...) asparagine glycosylation. A disulfide bridge connects residues C96 and C188. The helical transmembrane segment at 100–119 (SFFFLALGGAEALLLASMAY) threads the bilayer. Residues 120-138 (DRYIAICFPLHYLIRMSKR) are Cytoplasmic-facing. The helical transmembrane segment at 139–157 (VCVLMITGSWIIGSINACA) threads the bilayer. The Extracellular segment spans residues 158-194 (HTVYVLHIPYCRSRAINHFFCDVPAMVTLACMDTWVY). The helical transmembrane segment at 195-218 (EGTVFLSATIFLVFPFIGISCSYG) threads the bilayer. The Cytoplasmic portion of the chain corresponds to 219–235 (QVLFAVYHMKSAEGRKK). Residues 236–258 (AYLTCSTHLTVVTFYYAPFVYTY) traverse the membrane as a helical segment. The Extracellular portion of the chain corresponds to 259–271 (LRPRSLRSPTEDK). The chain crosses the membrane as a helical span at residues 272-291 (VLAVFYTILTPMLNPIIYSL). At 292 to 312 (RNKEVMGALTRVSQRICSVKM) the chain is on the cytoplasmic side.

This sequence belongs to the G-protein coupled receptor 1 family.

The protein resides in the cell membrane. Its function is as follows. Odorant receptor. This Homo sapiens (Human) protein is Olfactory receptor 2L8 (OR2L8).